The chain runs to 394 residues: Histidinol dehydrogenase (394 aa).

NAD(+) is bound by residues Tyr113, Gln172, and Asn195. Substrate contacts are provided by Thr218, Gln240, and His243. The Zn(2+) site is built by Gln240 and His243. Catalysis depends on proton acceptor residues Glu294 and His295. Substrate-binding residues include His295, Asp327, Glu380, and His385. A Zn(2+)-binding site is contributed by Asp327. His385 contributes to the Zn(2+) binding site.

It belongs to the histidinol dehydrogenase family. It depends on Zn(2+) as a cofactor.

The catalysed reaction is L-histidinol + 2 NAD(+) + H2O = L-histidine + 2 NADH + 3 H(+). The protein operates within amino-acid biosynthesis; L-histidine biosynthesis; L-histidine from 5-phospho-alpha-D-ribose 1-diphosphate: step 9/9. Functionally, catalyzes the sequential NAD-dependent oxidations of L-histidinol to L-histidinaldehyde and then to L-histidine. The chain is Histidinol dehydrogenase from Sulfurisphaera tokodaii (strain DSM 16993 / JCM 10545 / NBRC 100140 / 7) (Sulfolobus tokodaii).